A 268-amino-acid polypeptide reads, in one-letter code: Bis(5'-nucleosyl)-tetraphosphatase, symmetrical (268 aa).

It belongs to the Ap4A hydrolase family.

It carries out the reaction P(1),P(4)-bis(5'-adenosyl) tetraphosphate + H2O = 2 ADP + 2 H(+). Its function is as follows. Hydrolyzes diadenosine 5',5'''-P1,P4-tetraphosphate to yield ADP. In Vibrio campbellii (strain ATCC BAA-1116), this protein is Bis(5'-nucleosyl)-tetraphosphatase, symmetrical.